The following is a 659-amino-acid chain: Cytochrome bo(3) ubiquinol oxidase subunit 1 (659 aa).

At 1 to 14 the chain is on the extracellular side; the sequence is MFGKLTLKAIPVDE. A helical transmembrane segment spans residues 15 to 35; the sequence is PIIMVTYISIILIALFISFSI. The Cytoplasmic portion of the chain corresponds to 36–58; sequence TYFKKWKYLWYEWFTTVDHKKIS. The helical transmembrane segment at 59 to 79 threads the bilayer; that stretch reads IMYGILAFIMLFRGFVDAILM. A ubiquinone-binding residues include Arg-71, Asp-75, and His-98. Over 80-106 the chain is Extracellular; it reads RTQQVIASSGNTGFLPPHHYDQIFTAH. His-106 is a binding site for heme b. The chain crosses the membrane as a helical span at residues 107–127; that stretch reads GVIMIFFVAMPLVIGLMNLVV. The Cytoplasmic portion of the chain corresponds to 128–145; sequence PLQIGARDVAFPFLNNLS. Residues 146 to 166 traverse the membrane as a helical segment; that stretch reads FWLNVSGAILLTLSLGIGEFA. At 167 to 189 the chain is on the extracellular side; it reads QTGWLAYPPLSEVKYSPGVGVDY. Residue Trp-170 participates in heme b binding. Residues 190–210 traverse the membrane as a helical segment; that stretch reads WIWSLQISGVGTTLTGINFLI. The Cytoplasmic portion of the chain corresponds to 211–225; that stretch reads TILKMRAPGMCFFKM. The chain crosses the membrane as a helical span at residues 226 to 246; the sequence is PVFTWAALCTNILIVISFPVL. The Extracellular segment spans residues 247 to 277; the sequence is TTTLLLLTLDRCFDFHFFTNNFGGNPMMYVN. Residues 278–298 traverse the membrane as a helical segment; it reads LIWIWGHPEVYILVLPVFGVF. His-284 is a binding site for Cu(2+). The segment at residues 284–288 is a cross-link (1'-histidyl-3'-tyrosine (His-Tyr)); that stretch reads HPEVY. Residue Tyr-288 coordinates Fe(II)-heme o. The Cytoplasmic segment spans residues 299-309; sequence SEVVATFSKKR. The chain crosses the membrane as a helical span at residues 310–330; the sequence is LFGYVSLVWATLAITILSFIV. Residues 331–347 lie on the Extracellular side of the membrane; sequence WLHHFFTMGAGSNVNAF. Cu(2+)-binding residues include His-333 and His-334. The helical transmembrane segment at 348–368 threads the bilayer; it reads FGITTMIIAIPTGVKIFNWLF. The Cytoplasmic segment spans residues 369-380; sequence TMYQGRVHMHSS. The helical transmembrane segment at 381–401 threads the bilayer; the sequence is MLWTIGFLITFSIGGMTGVLL. The Extracellular portion of the chain corresponds to 402-413; sequence SIPPADFILHNS. 2 residues coordinate Fe(II)-heme o: His-411 and His-419. The helical transmembrane segment at 414–434 threads the bilayer; that stretch reads LFLVAHFHNVIIGGVVFGCFA. A heme b-binding site is contributed by His-421. The Cytoplasmic segment spans residues 435–456; the sequence is GINYWFPKLFGFILNELWGKRA. The chain crosses the membrane as a helical span at residues 457 to 477; sequence FWFWIIGFFTAFMPLYFLGFM. Residues 478-490 lie on the Extracellular side of the membrane; it reads GMTRRLSQNIDIE. Heme b is bound by residues Arg-481 and Arg-482. A helical transmembrane segment spans residues 491-511; sequence FHFLLSIAAIGAILIGIGILC. Residues 512 to 580 lie on the Cytoplasmic side of the membrane; it reads QIIQFWVSVR…KNQVQKKQYS (69 aa). A helical transmembrane segment spans residues 581–601; sequence AIHMPKNTGLGIFISFFSLLF. Residues 602 to 605 lie on the Extracellular side of the membrane; the sequence is GFSA. Residues 606–626 form a helical membrane-spanning segment; it reads VWNIIWLSFLSFLVVIISLIF. Over 627–659 the chain is Cytoplasmic; it reads KSIDENTEYTVSVKEIESIENRHLENVQKAGLK.

The protein belongs to the heme-copper respiratory oxidase family. In terms of assembly, the cytochrome bo(3) ubiquinol oxidase complex is a heterooctamer of two A chains, two B chains, two C chains and two D chains. Requires Cu(2+) as cofactor. Heme b serves as cofactor. Fe(II)-heme o is required as a cofactor.

The protein localises to the cell membrane. It carries out the reaction 2 a ubiquinol + O2 + n H(+)(in) = 2 a ubiquinone + 2 H2O + n H(+)(out). Cytochrome bo(3) ubiquinol oxidase is the terminal enzyme in the aerobic respiratory chain. Catalyzes the four-electron reduction of O2 to water, using a ubiquinol as a membrane soluble electron donor for molecular oxygen reduction. Has proton pump activity across the membrane in addition to electron transfer, pumping 2 protons/electron and generating a proton motive force. All the redox centers of this enzyme complex are located within the largest subunit, subunit I. Protons are probably pumped via D- and K- channels found in this subunit. In Buchnera aphidicola subsp. Schizaphis graminum (strain Sg), this protein is Cytochrome bo(3) ubiquinol oxidase subunit 1 (cyoB).